Reading from the N-terminus, the 697-residue chain is Glycine--tRNA ligase beta subunit (697 aa).

The protein belongs to the class-II aminoacyl-tRNA synthetase family. In terms of assembly, tetramer of two alpha and two beta subunits.

It localises to the cytoplasm. The catalysed reaction is tRNA(Gly) + glycine + ATP = glycyl-tRNA(Gly) + AMP + diphosphate. The sequence is that of Glycine--tRNA ligase beta subunit from Cereibacter sphaeroides (strain ATCC 17029 / ATH 2.4.9) (Rhodobacter sphaeroides).